A 564-amino-acid polypeptide reads, in one-letter code: Mercuric reductase (564 aa).

Residues M1–T65 enclose the HMA domain. Positions 11 and 14 each coordinate a metal cation. Residues A109, G129, and T134 each coordinate FAD. C135 and C140 form a disulfide bridge. The FAD site is built by K144, A210, D406, and V414. C561 and C562 together coordinate Hg(2+).

Belongs to the class-I pyridine nucleotide-disulfide oxidoreductase family. Homodimer. The cofactor is FAD.

The catalysed reaction is Hg + NADP(+) + H(+) = Hg(2+) + NADPH. Resistance to Hg(2+) in bacteria appears to be governed by a specialized system which includes mercuric reductase. MerA protein is responsible for volatilizing mercury as Hg(0). The chain is Mercuric reductase (merA) from Shigella flexneri.